The following is a 132-amino-acid chain: MAVPTSVSLVLASVTAVLIFSAMQMYKPLIASSQMATVFGGFLGSWLFILSLTAVSNLEAVVLGKGFQAKLFPEVAFCLIGSLFACGMVHRVCATTCILFSVAALYYINRISQKVHNAPVPVDTYAGKKKKK.

The next 4 helical transmembrane spans lie at methionine 1–serine 21, methionine 35–valine 55, alanine 69–valine 89, and valine 92–asparagine 109.

It belongs to the KRTCAP2 family. In terms of assembly, component of the oligosaccharyltransferase (OST) complex.

Its subcellular location is the membrane. Its function is as follows. Subunit of the oligosaccharyl transferase (OST) complex that catalyzes the initial transfer of a defined glycan (Glc(3)Man(9)GlcNAc(2) in eukaryotes) from the lipid carrier dolichol-pyrophosphate to an asparagine residue within an Asn-X-Ser/Thr consensus motif in nascent polypeptide chains, the first step in protein N-glycosylation. N-glycosylation occurs cotranslationally and the complex associates with the Sec61 complex at the channel-forming translocon complex that mediates protein translocation across the endoplasmic reticulum (ER). All subunits are required for a maximal enzyme activity. This chain is Protein KRTCAP2 homolog, found in Aedes aegypti (Yellowfever mosquito).